Reading from the N-terminus, the 295-residue chain is 4-hydroxy-3-methylbut-2-enyl diphosphate reductase (295 aa).

A [4Fe-4S] cluster-binding site is contributed by Cys-12. (2E)-4-hydroxy-3-methylbut-2-enyl diphosphate is bound by residues His-43 and His-81. Dimethylallyl diphosphate contacts are provided by His-43 and His-81. The isopentenyl diphosphate site is built by His-43 and His-81. [4Fe-4S] cluster is bound at residue Cys-103. His-131 contacts (2E)-4-hydroxy-3-methylbut-2-enyl diphosphate. His-131 contacts dimethylallyl diphosphate. Residue His-131 participates in isopentenyl diphosphate binding. Glu-133 functions as the Proton donor in the catalytic mechanism. A (2E)-4-hydroxy-3-methylbut-2-enyl diphosphate-binding site is contributed by Thr-171. A [4Fe-4S] cluster-binding site is contributed by Cys-199. The (2E)-4-hydroxy-3-methylbut-2-enyl diphosphate site is built by Ser-227, Asn-229, and Ser-272. 3 residues coordinate dimethylallyl diphosphate: Ser-227, Asn-229, and Ser-272. Residues Ser-227, Asn-229, and Ser-272 each contribute to the isopentenyl diphosphate site.

This sequence belongs to the IspH family. [4Fe-4S] cluster serves as cofactor.

It catalyses the reaction isopentenyl diphosphate + 2 oxidized [2Fe-2S]-[ferredoxin] + H2O = (2E)-4-hydroxy-3-methylbut-2-enyl diphosphate + 2 reduced [2Fe-2S]-[ferredoxin] + 2 H(+). The enzyme catalyses dimethylallyl diphosphate + 2 oxidized [2Fe-2S]-[ferredoxin] + H2O = (2E)-4-hydroxy-3-methylbut-2-enyl diphosphate + 2 reduced [2Fe-2S]-[ferredoxin] + 2 H(+). It participates in isoprenoid biosynthesis; dimethylallyl diphosphate biosynthesis; dimethylallyl diphosphate from (2E)-4-hydroxy-3-methylbutenyl diphosphate: step 1/1. It functions in the pathway isoprenoid biosynthesis; isopentenyl diphosphate biosynthesis via DXP pathway; isopentenyl diphosphate from 1-deoxy-D-xylulose 5-phosphate: step 6/6. Functionally, catalyzes the conversion of 1-hydroxy-2-methyl-2-(E)-butenyl 4-diphosphate (HMBPP) into a mixture of isopentenyl diphosphate (IPP) and dimethylallyl diphosphate (DMAPP). Acts in the terminal step of the DOXP/MEP pathway for isoprenoid precursor biosynthesis. The sequence is that of 4-hydroxy-3-methylbut-2-enyl diphosphate reductase from Symbiobacterium thermophilum (strain DSM 24528 / JCM 14929 / IAM 14863 / T).